The primary structure comprises 448 residues: Protein Z-dependent protease inhibitor (448 aa).

A signal peptide spans 1–21 (MRVASSLFLPVLLTEVWLVTS). The disordered stretch occupies residues 33–70 (VHLESQDYENQTWEEYTRTDPREEEEEEEEKEEGKDEE). Residues 54-63 (REEEEEEEEK) are compositionally biased toward acidic residues. N81 is a glycosylation site (N-linked (GlcNAc...) asparagine). A heparin-binding region spans residues 140–157 (AGPLILPALFKKVKETFS). Residues N184, N278, and N299 are each glycosylated (N-linked (GlcNAc...) asparagine).

Belongs to the serpin family. In terms of processing, phosphorylated by FAM20C in the extracellular medium. In terms of tissue distribution, detectable in liver, but not in heart, brain, spleen, lung, kidney, skeletal muscle or testes.

It is found in the secreted. Functionally, inhibits activity of the coagulation protease factor Xa in the presence of PROZ, calcium and phospholipids. Also inhibits factor XIa in the absence of cofactors. The polypeptide is Protein Z-dependent protease inhibitor (Serpina10) (Mus musculus (Mouse)).